The primary structure comprises 450 residues: ATP-dependent protease ATPase subunit HslU (450 aa).

ATP is bound by residues Val-29, 71-76 (GVGKTE), Asp-261, Glu-328, and Arg-400.

This sequence belongs to the ClpX chaperone family. HslU subfamily. A double ring-shaped homohexamer of HslV is capped on each side by a ring-shaped HslU homohexamer. The assembly of the HslU/HslV complex is dependent on binding of ATP.

The protein resides in the cytoplasm. ATPase subunit of a proteasome-like degradation complex; this subunit has chaperone activity. The binding of ATP and its subsequent hydrolysis by HslU are essential for unfolding of protein substrates subsequently hydrolyzed by HslV. HslU recognizes the N-terminal part of its protein substrates and unfolds these before they are guided to HslV for hydrolysis. The protein is ATP-dependent protease ATPase subunit HslU of Rickettsia felis (strain ATCC VR-1525 / URRWXCal2) (Rickettsia azadi).